Reading from the N-terminus, the 379-residue chain is Serpin B5 (379 aa).

3 N-linked (GlcNAc...) asparagine glycosylation sites follow: Asn133, Asn176, and Asn361.

The protein belongs to the serpin family. Ov-serpin subfamily.

It localises to the secreted. It is found in the extracellular space. Its function is as follows. May not exhibit serine protease inhibitory activity. The chain is Serpin B5 (serpinb5) from Xenopus tropicalis (Western clawed frog).